A 185-amino-acid polypeptide reads, in one-letter code: Large ribosomal subunit protein bL17 (185 aa).

It belongs to the bacterial ribosomal protein bL17 family. As to quaternary structure, part of the 50S ribosomal subunit. Contacts protein L32.

This chain is Large ribosomal subunit protein bL17, found in Rhodococcus erythropolis (strain PR4 / NBRC 100887).